We begin with the raw amino-acid sequence, 347 residues long: Probable dual-specificity RNA methyltransferase RlmN (347 aa).

E94 functions as the Proton acceptor in the catalytic mechanism. The Radical SAM core domain maps to Y100 to D319. C107 and C334 are oxidised to a cystine. Residues C114, C118, and C121 each contribute to the [4Fe-4S] cluster site. S-adenosyl-L-methionine-binding positions include G161–E162, S193, S216–H218, and N292. Residue C334 is the S-methylcysteine intermediate of the active site.

Belongs to the radical SAM superfamily. RlmN family. [4Fe-4S] cluster is required as a cofactor.

The protein resides in the cytoplasm. The catalysed reaction is adenosine(2503) in 23S rRNA + 2 reduced [2Fe-2S]-[ferredoxin] + 2 S-adenosyl-L-methionine = 2-methyladenosine(2503) in 23S rRNA + 5'-deoxyadenosine + L-methionine + 2 oxidized [2Fe-2S]-[ferredoxin] + S-adenosyl-L-homocysteine. It carries out the reaction adenosine(37) in tRNA + 2 reduced [2Fe-2S]-[ferredoxin] + 2 S-adenosyl-L-methionine = 2-methyladenosine(37) in tRNA + 5'-deoxyadenosine + L-methionine + 2 oxidized [2Fe-2S]-[ferredoxin] + S-adenosyl-L-homocysteine. Specifically methylates position 2 of adenine 2503 in 23S rRNA and position 2 of adenine 37 in tRNAs. This chain is Probable dual-specificity RNA methyltransferase RlmN, found in Petrotoga mobilis (strain DSM 10674 / SJ95).